Consider the following 125-residue polypeptide: Aspartate 1-decarboxylase (125 aa).

The Schiff-base intermediate with substrate; via pyruvic acid role is filled by Ser25. Residue Ser25 is modified to Pyruvic acid (Ser). Thr57 is a substrate binding site. Tyr58 functions as the Proton donor in the catalytic mechanism. 71–73 (GAA) provides a ligand contact to substrate.

This sequence belongs to the PanD family. In terms of assembly, heterooctamer of four alpha and four beta subunits. Pyruvate is required as a cofactor. Is synthesized initially as an inactive proenzyme, which is activated by self-cleavage at a specific serine bond to produce a beta-subunit with a hydroxyl group at its C-terminus and an alpha-subunit with a pyruvoyl group at its N-terminus.

Its subcellular location is the cytoplasm. It carries out the reaction L-aspartate + H(+) = beta-alanine + CO2. Its pathway is cofactor biosynthesis; (R)-pantothenate biosynthesis; beta-alanine from L-aspartate: step 1/1. In terms of biological role, catalyzes the pyruvoyl-dependent decarboxylation of aspartate to produce beta-alanine. The protein is Aspartate 1-decarboxylase of Hydrogenobaculum sp. (strain Y04AAS1).